The following is a 106-amino-acid chain: Large ribosomal subunit protein eL42 (106 aa).

The disordered stretch occupies residues 26–53 (YKKGKDSLYAQGKRRYDRKQSGYGGQTK).

This sequence belongs to the eukaryotic ribosomal protein eL42 family. As to quaternary structure, component of the large ribosomal subunit.

Its subcellular location is the cytoplasm. In terms of biological role, component of the large ribosomal subunit. The ribosome is a large ribonucleoprotein complex responsible for the synthesis of proteins in the cell. The polypeptide is Large ribosomal subunit protein eL42 (rpl36a) (Danio rerio (Zebrafish)).